The following is a 471-amino-acid chain: Putative multidrug resistance protein MdtD (471 aa).

The Periplasmic portion of the chain corresponds to Met1–Gln11. The helical transmembrane segment at Leu12–Ala32 threads the bilayer. Residues Leu33–His48 lie on the Cytoplasmic side of the membrane. Residues Met49–Ala69 form a helical membrane-spanning segment. Topologically, residues Asp70–Asn76 are periplasmic. Residues Ile77–Thr97 form a helical membrane-spanning segment. At Leu98–Leu101 the chain is on the cytoplasmic side. Residues Leu102–Met124 traverse the membrane as a helical segment. Over Lys125–Thr137 the chain is Periplasmic. A helical transmembrane segment spans residues Phe138 to Val158. The Cytoplasmic segment spans residues Glu159–His164. The chain crosses the membrane as a helical span at residues Trp165 to Met185. Residues Pro186–Asp196 are Periplasmic-facing. Residues Leu197–Ser217 form a helical membrane-spanning segment. Over Lys218–Pro224 the chain is Cytoplasmic. Residues Leu225 to Ala245 form a helical membrane-spanning segment. The Periplasmic segment spans residues Arg246–Thr262. Residues Phe263–Met283 form a helical membrane-spanning segment. At Thr284–Pro285 the chain is on the cytoplasmic side. Residues Val286–Met306 form a helical membrane-spanning segment. The Periplasmic segment spans residues Val307–Thr341. A helical membrane pass occupies residues Leu342 to Leu362. The Cytoplasmic portion of the chain corresponds to Gln363–Ser395. The helical transmembrane segment at Met396–Phe416 threads the bilayer. Residues Gly417 to Thr430 are Periplasmic-facing. Residues Val431–Ala451 traverse the membrane as a helical segment. Residues Arg452 to Gln471 are Cytoplasmic-facing.

The protein belongs to the major facilitator superfamily. TCR/Tet family.

It is found in the cell inner membrane. The polypeptide is Putative multidrug resistance protein MdtD (Shigella sonnei (strain Ss046)).